The primary structure comprises 616 residues: Chaperone protein HtpG (616 aa).

An a; substrate-binding region spans residues 1–333 (MKKQFDTEVN…CQDLPLNVSR (333 aa)). Residues 334–542 (EILQQNKILS…SNDPTYQMQK (209 aa)) form a b region. Positions 543–616 (IMLSMGQEVK…INEFIEKDFL (74 aa)) are c.

Belongs to the heat shock protein 90 family. As to quaternary structure, homodimer.

It localises to the cytoplasm. Functionally, molecular chaperone. Has ATPase activity. The polypeptide is Chaperone protein HtpG (Borreliella burgdorferi (strain ATCC 35210 / DSM 4680 / CIP 102532 / B31) (Borrelia burgdorferi)).